We begin with the raw amino-acid sequence, 191 residues long: A-type ATP synthase subunit E 1 (191 aa).

Belongs to the V-ATPase E subunit family. In terms of assembly, has multiple subunits with at least A(3), B(3), C, D, E, F, H, I and proteolipid K(x).

The protein resides in the cell membrane. Functionally, component of the A-type ATP synthase that produces ATP from ADP in the presence of a proton gradient across the membrane. The polypeptide is A-type ATP synthase subunit E 1 (Methanospirillum hungatei JF-1 (strain ATCC 27890 / DSM 864 / NBRC 100397 / JF-1)).